A 491-amino-acid polypeptide reads, in one-letter code: Probable cytosol aminopeptidase (491 aa).

K261 and D266 together coordinate Mn(2+). Residue K273 is part of the active site. D285, D344, and E346 together coordinate Mn(2+). Residue R348 is part of the active site.

The protein belongs to the peptidase M17 family. It depends on Mn(2+) as a cofactor.

It is found in the cytoplasm. It carries out the reaction Release of an N-terminal amino acid, Xaa-|-Yaa-, in which Xaa is preferably Leu, but may be other amino acids including Pro although not Arg or Lys, and Yaa may be Pro. Amino acid amides and methyl esters are also readily hydrolyzed, but rates on arylamides are exceedingly low.. The enzyme catalyses Release of an N-terminal amino acid, preferentially leucine, but not glutamic or aspartic acids.. Presumably involved in the processing and regular turnover of intracellular proteins. Catalyzes the removal of unsubstituted N-terminal amino acids from various peptides. The chain is Probable cytosol aminopeptidase from Picosynechococcus sp. (strain ATCC 27264 / PCC 7002 / PR-6) (Agmenellum quadruplicatum).